A 92-amino-acid chain; its full sequence is uncharacterized protein (92 aa).

This is an uncharacterized protein from Methanocaldococcus jannaschii (strain ATCC 43067 / DSM 2661 / JAL-1 / JCM 10045 / NBRC 100440) (Methanococcus jannaschii).